Here is a 729-residue protein sequence, read N- to C-terminus: Kinesin-like protein KAR3 (729 aa).

The tract at residues 1-48 is disordered; the sequence is MESLPRTPTKGRSTQHLSTPSPKNDILAMNGHKRRNTTTPPPKHTLLK. Residues 1–109 are globular; it reads MESLPRTPTK…ENVNELNRTQ (109 aa). The segment covering 10–22 has biased composition (polar residues); sequence KGRSTQHLSTPSP. Residues 110–357 adopt a coiled-coil conformation; sequence AILFEKKATL…LEEYIKDTEL (248 aa). ATP contacts are provided by Asn-386, Arg-388, Arg-392, Glu-454, Gly-477, Ser-478, Gly-479, Lys-480, Thr-481, Phe-482, Glu-554, Lys-579, and Thr-694. The 338-residue stretch at 386–723 folds into the Kinesin motor domain; it reads NIRVYCRIRP…LRFASKVNST (338 aa).

This sequence belongs to the TRAFAC class myosin-kinesin ATPase superfamily. Kinesin family. NCD subfamily. Interacts with CIK1; the interaction is direct. Interacts with VIK1; the interaction is direct.

It localises to the cytoplasm. The protein resides in the cytoskeleton. The protein localises to the microtubule organizing center. It is found in the spindle pole body. Its subcellular location is the nucleus. It localises to the chromosome. The protein resides in the spindle. It catalyses the reaction ATP + H2O = ADP + phosphate + H(+). The catalysed reaction is ATP + H2O + a kinesin associated with a microtubule at position (n) = ADP + phosphate + a kinesin associated with a microtubule at position (n-1, toward the minus end).. In terms of biological role, minus end-directed microtubule (MT) motor involved in spindle midzone assembly, poleward transport of newly captured kinetochores along the lateral side of MTs, karyogamy (nuclear fusion) during mating, and with an essential function in meiosis I. Functions together with the accessory proteins CIK1 or VIK1. Drives the poleward transport of newly captured kinetochores along the lateral side of MTs, both during S-phase and during M-phase. To contribute to spindle midzone assembly during mitotic metaphase, the nuclear KAR3-CIK1 motor cross-links anti-parallel microtubules to align them on the spindle axis; as the motor travels polewards splayed microtubules are pulled into alignment. During the karyogamy (nuclear fusion) step of mating, KAR3-CIK1 cross-links antiparallel cytoplasmic microtubules emanating from the spindle pole bodies of mating partners; the motor activity of KAR3 creates the force that pulls the nuclei together by sliding cross-linked microtubules past one another. KAR3-CIK1 promotes microtubule shortening predominantly from the microtubule plus-end. Together with cytoplasmic VIK1, may act to stabilize microtubules. Requires accessory protein VIK1 for spindle pole body localization and to allow the CIN8 and KIP1 motors to generate outwardly directed spindle forces. Essential during meiosis I. The ATPase activity is stimulated by microtubule-binding. This is Kinesin-like protein KAR3 (KAR3) from Saccharomyces cerevisiae (strain ATCC 204508 / S288c) (Baker's yeast).